Here is a 514-residue protein sequence, read N- to C-terminus: tRNA-2-methylthio-N(6)-dimethylallyladenosine synthase (514 aa).

The MTTase N-terminal domain occupies 68–186 (RTFLIKTYGC…LPEILEEAYL (119 aa)). C77, C113, C147, C223, C227, and C230 together coordinate [4Fe-4S] cluster. Residues 209 to 439 (RDGHIKAWVN…NKKVGIYSQQ (231 aa)) form the Radical SAM core domain. The region spanning 442–505 (SQYEGKIVTV…QYSLNGTFIQ (64 aa)) is the TRAM domain.

The protein belongs to the methylthiotransferase family. MiaB subfamily. As to quaternary structure, monomer. The cofactor is [4Fe-4S] cluster.

It is found in the cytoplasm. The catalysed reaction is N(6)-dimethylallyladenosine(37) in tRNA + (sulfur carrier)-SH + AH2 + 2 S-adenosyl-L-methionine = 2-methylsulfanyl-N(6)-dimethylallyladenosine(37) in tRNA + (sulfur carrier)-H + 5'-deoxyadenosine + L-methionine + A + S-adenosyl-L-homocysteine + 2 H(+). Catalyzes the methylthiolation of N6-(dimethylallyl)adenosine (i(6)A), leading to the formation of 2-methylthio-N6-(dimethylallyl)adenosine (ms(2)i(6)A) at position 37 in tRNAs that read codons beginning with uridine. The sequence is that of tRNA-2-methylthio-N(6)-dimethylallyladenosine synthase from Staphylococcus epidermidis (strain ATCC 35984 / DSM 28319 / BCRC 17069 / CCUG 31568 / BM 3577 / RP62A).